Here is a 953-residue protein sequence, read N- to C-terminus: Coatomer subunit beta (953 aa).

Thr-2 carries the N-acetylthreonine modification. HEAT repeat units follow at residues 96–131 (HEMILVCDAYRKDLQHPNEFIRGSTLRFLCKLKEAE), 132–168 (LLEPLMPAIRACLEHRHSYVRRNAVLAIYTIYRNFEH), 240–276 (SERARFIRCIYNLLQSSSPAVKYEAAGTLVTLSSAPT), 277–314 (AIKAAAQCYIDLIIKESDNNVKLIVLDRLIELKEHPAH), 316–353 (RVLQDLVMDILRVLSTPDLEVRKKTLQLALDLVSSRNV), and 396–433 (DMAANVIPVLMEFLSDNNEAAAADVLEFVREAIQRFDN). At Lys-494 the chain carries N6-acetyllysine.

In terms of assembly, oligomeric complex that consists of at least the alpha, beta, beta', gamma, delta, epsilon and zeta subunits. Interacts (via C-terminus) with HIV-1 Nef; the interaction is direct. Interacts with CAPN8 and PRKCE. Interacts with SCYL1. Interacts with COPG1. Interacts with ARF1 (myristoylated); this interaction is required for binding of COPB1 to Golgi membranes. Interacts (via trunk domain) with ARF1 (via switch I region); the interaction is direct. Interacts with KCNK2 (via N-terminus); this interaction increases the channel-mediated whole cell currents and promotes plasma membrane expression of KCNK2. Interacts with anthrax lethal factor (LF); this interaction may facilitate endosomal vesicle membrane translocation of LF and its release from the lumen of endosomal vesicles to external milieu. Interacts with STX17. Interacts with TMEM115. Interacts with TMEM41B.

It localises to the cytoplasm. The protein localises to the golgi apparatus membrane. The protein resides in the cytoplasmic vesicle. It is found in the COPI-coated vesicle membrane. Its subcellular location is the cell membrane. It localises to the endoplasmic reticulum-Golgi intermediate compartment. In terms of biological role, the coatomer is a cytosolic protein complex that binds to dilysine motifs and reversibly associates with Golgi non-clathrin-coated vesicles, which further mediate biosynthetic protein transport from the ER, via the Golgi up to the trans Golgi network. Coatomer complex is required for budding from Golgi membranes, and is essential for the retrograde Golgi-to-ER transport of dilysine-tagged proteins. In mammals, the coatomer can only be recruited by membranes associated to ADP-ribosylation factors (ARFs), which are small GTP-binding proteins; the complex also influences the Golgi structural integrity, as well as the processing, activity, and endocytic recycling of LDL receptors. Plays a functional role in facilitating the transport of kappa-type opioid receptor mRNAs into axons and enhances translation of these proteins. Required for limiting lipid storage in lipid droplets. Involved in lipid homeostasis by regulating the presence of perilipin family members PLIN2 and PLIN3 at the lipid droplet surface and promoting the association of adipocyte surface triglyceride lipase (PNPLA2) with the lipid droplet to mediate lipolysis. Involved in the Golgi disassembly and reassembly processes during cell cycle. Involved in autophagy by playing a role in early endosome function. Plays a role in organellar compartmentalization of secretory compartments including endoplasmic reticulum (ER)-Golgi intermediate compartment (ERGIC), Golgi, trans-Golgi network (TGN) and recycling endosomes, and in biosynthetic transport of CAV1. Promotes degradation of Nef cellular targets CD4 and MHC class I antigens by facilitating their trafficking to degradative compartments. This Pongo abelii (Sumatran orangutan) protein is Coatomer subunit beta (COPB1).